We begin with the raw amino-acid sequence, 537 residues long: Aminopeptidase Y (537 aa).

An N-terminal signal peptide occupies residues 1 to 21 (MHFSLKQLAVAAFYATNLGSA). A propeptide spanning residues 22–56 (YVIPQFFQEAFQQEEPIENYLPQLNDDDSSAVAAN) is cleaved from the precursor. N-linked (GlcNAc...) asparagine glycans are attached at residues N85, N96, N115, N150, and N162. Residues H314 and D326 each contribute to the Zn(2+) site. E358 serves as the catalytic Proton acceptor. E359 lines the Zn(2+) pocket. N371 is a glycosylation site (N-linked (GlcNAc...) asparagine). Position 387 (D387) interacts with Zn(2+). An N-linked (GlcNAc...) asparagine glycan is attached at N427. Zn(2+) is bound at residue H472. The N-linked (GlcNAc...) asparagine glycan is linked to N480.

The protein belongs to the peptidase M28 family. M28A subfamily. Monomer. Requires Zn(2+) as cofactor.

Its subcellular location is the vacuole. It carries out the reaction Preferentially, release of N-terminal lysine.. This Saccharomyces cerevisiae (strain ATCC 204508 / S288c) (Baker's yeast) protein is Aminopeptidase Y (APE3).